The sequence spans 371 residues: Chaperone protein DnaJ (371 aa).

Residues 5–69 (DYYEVLGLSK…QKRAQYDQFG (65 aa)) form the J domain. The CR-type zinc finger occupies 133 to 215 (GKELNVEIPV…CHGSGKVRKR (83 aa)). Residues cysteine 146, cysteine 149, cysteine 163, cysteine 166, cysteine 189, cysteine 192, cysteine 203, and cysteine 206 each coordinate Zn(2+). 4 CXXCXGXG motif repeats span residues 146–153 (CDTCKGSG), 163–170 (CKHCSGSG), 189–196 (CSHCSGTG), and 203–210 (CTTCHGSG).

Belongs to the DnaJ family. As to quaternary structure, homodimer. Requires Zn(2+) as cofactor.

Its subcellular location is the cytoplasm. Participates actively in the response to hyperosmotic and heat shock by preventing the aggregation of stress-denatured proteins and by disaggregating proteins, also in an autonomous, DnaK-independent fashion. Unfolded proteins bind initially to DnaJ; upon interaction with the DnaJ-bound protein, DnaK hydrolyzes its bound ATP, resulting in the formation of a stable complex. GrpE releases ADP from DnaK; ATP binding to DnaK triggers the release of the substrate protein, thus completing the reaction cycle. Several rounds of ATP-dependent interactions between DnaJ, DnaK and GrpE are required for fully efficient folding. Also involved, together with DnaK and GrpE, in the DNA replication of plasmids through activation of initiation proteins. In Bacillus cereus (strain AH820), this protein is Chaperone protein DnaJ.